Reading from the N-terminus, the 312-residue chain is DNA-directed RNA polymerase subunit alpha (312 aa).

The interval 1 to 226 (MIEFEKPIIT…EHLNLFTDLT (226 aa)) is alpha N-terminal domain (alpha-NTD). The alpha C-terminal domain (alpha-CTD) stretch occupies residues 242–312 (NDEKLLDRTI…DLGLGLKNDK (71 aa)).

The protein belongs to the RNA polymerase alpha chain family. As to quaternary structure, homodimer. The RNAP catalytic core consists of 2 alpha, 1 beta, 1 beta' and 1 omega subunit. When a sigma factor is associated with the core the holoenzyme is formed, which can initiate transcription.

It carries out the reaction RNA(n) + a ribonucleoside 5'-triphosphate = RNA(n+1) + diphosphate. In terms of biological role, DNA-dependent RNA polymerase catalyzes the transcription of DNA into RNA using the four ribonucleoside triphosphates as substrates. The chain is DNA-directed RNA polymerase subunit alpha from Streptococcus thermophilus (strain CNRZ 1066).